The sequence spans 328 residues: Phosphate acyltransferase (328 aa).

It belongs to the PlsX family. In terms of assembly, homodimer. Probably interacts with PlsY.

Its subcellular location is the cytoplasm. It catalyses the reaction a fatty acyl-[ACP] + phosphate = an acyl phosphate + holo-[ACP]. The protein operates within lipid metabolism; phospholipid metabolism. Catalyzes the reversible formation of acyl-phosphate (acyl-PO(4)) from acyl-[acyl-carrier-protein] (acyl-ACP). This enzyme utilizes acyl-ACP as fatty acyl donor, but not acyl-CoA. The chain is Phosphate acyltransferase from Campylobacter jejuni subsp. jejuni serotype O:6 (strain 81116 / NCTC 11828).